A 525-amino-acid chain; its full sequence is GMP synthase [glutamine-hydrolyzing] (525 aa).

The Glutamine amidotransferase type-1 domain maps to 13 to 202 (TILVLDFGSQ…AVDLCHAKQN (190 aa)). Cys89 (nucleophile) is an active-site residue. Catalysis depends on residues His176 and Glu178. Residues 203–400 (WTMENFIDTE…LGIPHDLVWR (198 aa)) form the GMPS ATP-PPase domain. 231-237 (SGGVDST) is an ATP binding site. Lys241 is covalently cross-linked (Glycyl lysine isopeptide (Lys-Gly) (interchain with G-Cter in ubiquitin)). XMP is bound at residue Arg304. Lys426 participates in a covalent cross-link: Glycyl lysine isopeptide (Lys-Gly) (interchain with G-Cter in ubiquitin). XMP contacts are provided by Asp462, Lys517, and Glu523.

As to quaternary structure, homodimer. The cofactor is Mg(2+).

The protein localises to the cytoplasm. The protein resides in the cytosol. The enzyme catalyses XMP + L-glutamine + ATP + H2O = GMP + L-glutamate + AMP + diphosphate + 2 H(+). The protein operates within purine metabolism; GMP biosynthesis; GMP from XMP (L-Gln route): step 1/1. In terms of biological role, catalyzes the conversion of xanthine monophosphate (XMP) to GMP in the presence of glutamine and ATP through an adenyl-XMP intermediate. This is GMP synthase [glutamine-hydrolyzing] from Saccharomyces cerevisiae (strain ATCC 204508 / S288c) (Baker's yeast).